A 150-amino-acid chain; its full sequence is Large ribosomal subunit protein uL11 (150 aa).

It belongs to the universal ribosomal protein uL11 family. Part of the ribosomal stalk of the 50S ribosomal subunit. Interacts with L10 and the large rRNA to form the base of the stalk. L10 forms an elongated spine to which L12 dimers bind in a sequential fashion forming a multimeric L10(L12)X complex. Post-translationally, one or more lysine residues are methylated.

Its function is as follows. Forms part of the ribosomal stalk which helps the ribosome interact with GTP-bound translation factors. This is Large ribosomal subunit protein uL11 from Ureaplasma parvum serovar 3 (strain ATCC 27815 / 27 / NCTC 11736).